Here is a 769-residue protein sequence, read N- to C-terminus: MSFGDRIEDYEVYEILGKGGFASVYRARCLGSGTFVAIKMIDKKLMQSSGMANRVRQEVSIHSQLKHPSILELYTFFEDASHVYLVLELAENGELQRYLRETKKTFNEYEAASVLKQVVDGLLYLHSHHILHRDMSLANLLLTKQMTVKISDFGLATQLTRPDEKHMTLCGTPNYISPEVASRASHGLPADVWGLGCMLYTFLVGKPPFDTEGVKSTLTKVVMSNYTIPPYISSEARDLIDQLLKKNPAERIKLDQVLQHPFMRKATSYDSYRGGGTLASSDSGLVTMSSNGGSNRSNIPSSYGQDQRLQAPIIHQMPLRYQPISEHEYDFQESILPQQRPQSASHNKPTSDFFSGISNDPRTMAPSSPTKSPKKRLDIPPLNTARLLPNRHKTKNAILSIRSSGEVVLEFIKFKTRYKENRVVDVCRISSDGLRFVLYHPDGGKGVPIEEEPPDLPPGGADSIFSYENLPEKHWKKYQYAARFVQMVKAKTPKITYYSEKAKCQLMETLEDYEASFYSGTKIIKSPQDGVKFVDSSGIAIKTIASLSSSQNAEYQHFQQTLEHCLNIERALSAIQTGKTFPLIIGRRPANAPLTSSSSSSSSSTKENQLYSNISSPNTPQTPHQMPSFAMSTASHTSAGNPLTQRPVLSSKPVPANFSNVAMKKCTIAGVGTAVQLSQGVVQVQFLDGATLSLIPIEQGGGVTFSPAVGSPLQHYSTQDNDALLPASLREKIGQMPAILRELNAAPVPSIPFNFLEGSPRTPLTRFLR.

The Protein kinase domain occupies 10-263; it reads YEVYEILGKG…LDQVLQHPFM (254 aa). ATP-binding positions include 16–24 and K39; that span reads LGKGGFASV. D134 serves as the catalytic Proton acceptor. 3 disordered regions span residues 280–304, 337–380, and 592–651; these read SSDSGLVTMSSNGGSNRSNIPSSYG, PQQR…LDIP, and APLT…VLSS. The segment covering 337-371 has biased composition (polar residues); that stretch reads PQQRPQSASHNKPTSDFFSGISNDPRTMAPSSPTK. Positions 374–491 constitute a Cryptic POLO box 1 (CPB1) domain; sequence KKRLDIPPLN…ARFVQMVKAK (118 aa). A Cryptic POLO box 2 (CPB2) domain is found at 492–595; it reads TPKITYYSEK…GRRPANAPLT (104 aa). Polar residues predominate over residues 605–648; sequence TKENQLYSNISSPNTPQTPHQMPSFAMSTASHTSAGNPLTQRPV. In terms of domain architecture, POLO box spans 662–745; sequence AMKKCTIAGV…MPAILRELNA (84 aa).

It belongs to the protein kinase superfamily. Ser/Thr protein kinase family. CDC5/Polo subfamily. As to quaternary structure, homodimer. Post-translationally, ubiquitinated; leading to its degradation by the proteasome.

The protein resides in the cytoplasm. It is found in the cytoskeleton. It localises to the microtubule organizing center. The protein localises to the centrosome. Its subcellular location is the centriole. The catalysed reaction is L-seryl-[protein] + ATP = O-phospho-L-seryl-[protein] + ADP + H(+). The enzyme catalyses L-threonyl-[protein] + ATP = O-phospho-L-threonyl-[protein] + ADP + H(+). Its function is as follows. Serine/threonine-protein kinase that plays a central role in centriole duplication. Able to trigger procentriole formation on the surface of the mother centriole cylinder, leading to the recruitment of centriole biogenesis proteins. When overexpressed, it is able to induce centrosome amplification through the simultaneous generation of multiple procentrioles adjoining each parental centriole during S phase. The chain is Serine/threonine-protein kinase PLK4 (SAK) from Aedes aegypti (Yellowfever mosquito).